The following is a 335-amino-acid chain: MDLNAILIILGVIALIILVAHGIWSNRCEKSQYFENSKNFTREARIREPQENQQYQTADQSQSDFQRNLLETDNDCFSSESAHNSHQPLYHYSEQSAVQSVDQIKIRLPDSEPNYVMQERFSPKHTDYASMSIEELEKSIDLDEGINSSSQHLRQELAQISGQSIADDKVNIEEHMFTESTISFVEPQTNTESQQVVEKTKSGNSSFIMLYVVASENQGFSGLQLTKTLDELGFIFGKKQIYHRHVDLSITSPVLFSVANIEQPGTFDLTNIADFYTVGIALFMQSPSYGNATANLRMMIRAAKTIAQDLDGVVVTEQQEIFDEQAERDYLARVS.

Residues 1 to 4 are Periplasmic-facing; sequence MDLN. The chain crosses the membrane as a helical span at residues 5–25; the sequence is AILIILGVIALIILVAHGIWS. Residues 26–335 lie on the Cytoplasmic side of the membrane; sequence NRCEKSQYFE…AERDYLARVS (310 aa).

It belongs to the ZipA family. Interacts with FtsZ via their C-terminal domains.

It localises to the cell inner membrane. Its function is as follows. Essential cell division protein that stabilizes the FtsZ protofilaments by cross-linking them and that serves as a cytoplasmic membrane anchor for the Z ring. Also required for the recruitment to the septal ring of downstream cell division proteins. The polypeptide is Cell division protein ZipA (Histophilus somni (strain 129Pt) (Haemophilus somnus)).